Here is a 329-residue protein sequence, read N- to C-terminus: Neuropeptides B/W receptor type 1 (329 aa).

Residues Met1–Pro43 lie on the Extracellular side of the membrane. Residues Asn3, Asn13, and Asn25 are each glycosylated (N-linked (GlcNAc...) asparagine). The chain crosses the membrane as a helical span at residues Val44–Leu64. Over Leu65–Asn75 the chain is Cytoplasmic. A helical membrane pass occupies residues Val76–Ile96. The Extracellular segment spans residues Ala97 to Lys112. A disulfide bridge connects residues Cys111 and Cys190. The chain crosses the membrane as a helical span at residues Leu113 to Ser133. At Ala134–Arg158 the chain is on the cytoplasmic side. Residues Ala159 to Ala179 form a helical membrane-spanning segment. The Extracellular segment spans residues Arg180 to Thr209. The helical transmembrane segment at Leu210 to Cys230 threads the bilayer. Over Arg231–Arg250 the chain is Cytoplasmic. A helical membrane pass occupies residues Val251 to Leu271. The Extracellular segment spans residues Ser272–Gly289. The chain crosses the membrane as a helical span at residues Ile290–Leu312. Residues Asp313–Ala329 lie on the Cytoplasmic side of the membrane.

This sequence belongs to the G-protein coupled receptor 1 family.

The protein localises to the cell membrane. Its function is as follows. Interacts specifically with a number of opioid ligands. Receptor for neuropeptides B and W, which may be involved in neuroendocrine system regulation, food intake and the organization of other signals. In Mus musculus (Mouse), this protein is Neuropeptides B/W receptor type 1 (Npbwr1).